The primary structure comprises 546 residues: ATP synthase subunit alpha (546 aa).

173–180 (GDRQTGKT) lines the ATP pocket. The disordered stretch occupies residues 520–546 (VDKKTAPKSVTPVDQEQIKAGKAQEKK). Residues 535 to 546 (EQIKAGKAQEKK) are compositionally biased toward basic and acidic residues.

This sequence belongs to the ATPase alpha/beta chains family. As to quaternary structure, F-type ATPases have 2 components, CF(1) - the catalytic core - and CF(0) - the membrane proton channel. CF(1) has five subunits: alpha(3), beta(3), gamma(1), delta(1), epsilon(1). CF(0) has three main subunits: a(1), b(2) and c(9-12). The alpha and beta chains form an alternating ring which encloses part of the gamma chain. CF(1) is attached to CF(0) by a central stalk formed by the gamma and epsilon chains, while a peripheral stalk is formed by the delta and b chains.

It is found in the cell membrane. The enzyme catalyses ATP + H2O + 4 H(+)(in) = ADP + phosphate + 5 H(+)(out). Functionally, produces ATP from ADP in the presence of a proton gradient across the membrane. The alpha chain is a regulatory subunit. This Bifidobacterium animalis subsp. lactis (strain AD011) protein is ATP synthase subunit alpha.